The following is a 124-amino-acid chain: Profilin-2 (124 aa).

Belongs to the profilin family. In terms of assembly, occurs in many kinds of cells as a complex with monomeric actin in a 1:1 ratio. Interacts with forH.

It is found in the cytoplasm. Its subcellular location is the cytoskeleton. In terms of biological role, binds to actin and affects the structure of the cytoskeleton. At high concentrations, profilin prevents the polymerization of actin, whereas it enhances it at low concentrations. By binding to PIP2, it inhibits the formation of IP3 and DG. The chain is Profilin-2 (proB) from Dictyostelium discoideum (Social amoeba).